Consider the following 564-residue polypeptide: Sulfite reductase [NADPH] hemoprotein beta-component 1 (564 aa).

Residues Cys426, Cys432, Cys471, and Cys475 each contribute to the [4Fe-4S] cluster site. A siroheme-binding site is contributed by Cys475.

This sequence belongs to the nitrite and sulfite reductase 4Fe-4S domain family. As to quaternary structure, alpha(8)-beta(8). The alpha component is a flavoprotein, the beta component is a hemoprotein. It depends on siroheme as a cofactor. [4Fe-4S] cluster serves as cofactor.

The enzyme catalyses hydrogen sulfide + 3 NADP(+) + 3 H2O = sulfite + 3 NADPH + 4 H(+). It participates in sulfur metabolism; hydrogen sulfide biosynthesis; hydrogen sulfide from sulfite (NADPH route): step 1/1. Component of the sulfite reductase complex that catalyzes the 6-electron reduction of sulfite to sulfide. This is one of several activities required for the biosynthesis of L-cysteine from sulfate. This is Sulfite reductase [NADPH] hemoprotein beta-component 1 from Pectobacterium carotovorum subsp. carotovorum (strain PC1).